The chain runs to 292 residues: 4-hydroxy-tetrahydrodipicolinate synthase (292 aa).

Threonine 45 serves as a coordination point for pyruvate. Tyrosine 133 (proton donor/acceptor) is an active-site residue. Lysine 161 acts as the Schiff-base intermediate with substrate in catalysis. Isoleucine 203 provides a ligand contact to pyruvate.

The protein belongs to the DapA family. As to quaternary structure, homotetramer; dimer of dimers.

The protein resides in the cytoplasm. The enzyme catalyses L-aspartate 4-semialdehyde + pyruvate = (2S,4S)-4-hydroxy-2,3,4,5-tetrahydrodipicolinate + H2O + H(+). It functions in the pathway amino-acid biosynthesis; L-lysine biosynthesis via DAP pathway; (S)-tetrahydrodipicolinate from L-aspartate: step 3/4. Catalyzes the condensation of (S)-aspartate-beta-semialdehyde [(S)-ASA] and pyruvate to 4-hydroxy-tetrahydrodipicolinate (HTPA). This is 4-hydroxy-tetrahydrodipicolinate synthase from Salmonella typhi.